The chain runs to 32 residues: Photosystem I reaction center subunit XII (32 aa).

A helical membrane pass occupies residues Val10–Gly27.

Belongs to the PsaM family.

Its subcellular location is the plastid. It localises to the chloroplast thylakoid membrane. This is Photosystem I reaction center subunit XII from Staurastrum punctulatum (Green alga).